A 30-amino-acid chain; its full sequence is Bacteriocin curvaticin (30 aa).

An intrachain disulfide couples C9 to C14.

Its subcellular location is the secreted. Functionally, has antibacterial activity against the Gram-positive bacterium L.monocytogenes. The sequence is that of Bacteriocin curvaticin from Latilactobacillus curvatus (Lactobacillus curvatus).